A 296-amino-acid chain; its full sequence is tRNA dimethylallyltransferase (296 aa).

2 to 9 (GPTASGKT) is a binding site for ATP. A substrate-binding site is contributed by 4-9 (TASGKT). Interaction with substrate tRNA stretches follow at residues 27–30 (DSAL), 151–155 (QRLSR), and 232–237 (RCVGYR).

This sequence belongs to the IPP transferase family. As to quaternary structure, monomer. Requires Mg(2+) as cofactor.

The enzyme catalyses adenosine(37) in tRNA + dimethylallyl diphosphate = N(6)-dimethylallyladenosine(37) in tRNA + diphosphate. In terms of biological role, catalyzes the transfer of a dimethylallyl group onto the adenine at position 37 in tRNAs that read codons beginning with uridine, leading to the formation of N6-(dimethylallyl)adenosine (i(6)A). This is tRNA dimethylallyltransferase from Shewanella woodyi (strain ATCC 51908 / MS32).